A 306-amino-acid polypeptide reads, in one-letter code: Deoxyribokinase (306 aa).

Substrate-binding positions include 10-12 (MVD), 38-42 (GKGAN), and Glu-139. ATP-binding positions include Asn-184 and 220–225 (TMGEKG). K(+) contacts are provided by Asp-246 and Ser-248. 251 to 252 (GD) is a binding site for ATP. Residue Asp-252 coordinates substrate. Catalysis depends on Asp-252, which acts as the Proton acceptor. K(+) contacts are provided by Ser-282, Gly-285, Gly-287, and Ser-291.

The protein belongs to the carbohydrate kinase PfkB family. Deoxyribokinase subfamily. Homodimer. It depends on Mg(2+) as a cofactor.

The protein resides in the cytoplasm. It carries out the reaction 2-deoxy-D-ribose + ATP = 2-deoxy-D-ribose 5-phosphate + ADP + H(+). Functionally, catalyzes the ATP-dependent phosphorylation of 2-deoxy-D-ribose to 2-deoxy-D-ribose 5-phosphate (dRib-5P), allowing the use of deoxyribose as the sole carbon source. Can also use D-ribose, with much lower efficiency. This chain is Deoxyribokinase, found in Salmonella typhi.